Consider the following 468-residue polypeptide: Squamosa promoter-binding-like protein 5 (468 aa).

Residues 204–281 form an SBP-type zinc finger; the sequence is PPRCQAEGCK…TEHNRRRRKP (78 aa). 8 residues coordinate Zn(2+): cysteine 207, cysteine 212, cysteine 229, histidine 232, cysteine 248, cysteine 251, histidine 255, and cysteine 267. The Bipartite nuclear localization signal signature appears at 264–280; sequence KRSCRKRLTEHNRRRRK. 3 disordered regions span residues 270-305, 354-374, and 405-458; these read RLTE…DASI, TLSL…DGGL, and HHHL…SNNN. Acidic residues predominate over residues 363–372; sequence QEEDDEDEDG. The segment covering 438–458 has biased composition (low complexity); that stretch reads NNNNILSCSSASDQQNSSNNN.

In terms of tissue distribution, ubiquitous.

It localises to the nucleus. In terms of biological role, trans-acting factor that binds specifically to the consensus nucleotide sequence 5'-TNCGTACAA-3'. The sequence is that of Squamosa promoter-binding-like protein 5 (SPL5) from Oryza sativa subsp. japonica (Rice).